We begin with the raw amino-acid sequence, 360 residues long: U7 snRNA-associated Sm-like protein LSm11 (360 aa).

The disordered stretch occupies residues 1–29 (MEERERGARSAGAGSPARPPSPRLDVSSD). Phosphoserine is present on residues Ser15 and Ser21. At Arg41 the chain carries Omega-N-methylarginine. The tract at residues 68-143 (RGGGRGRGRA…PGRSRKAPRN (76 aa)) is disordered. Residues 78 to 94 (RGAAAGSGVPAAPGPSG) show a composition bias toward low complexity. Lys120 participates in a covalent cross-link: Glycyl lysine isopeptide (Lys-Gly) (interchain with G-Cter in SUMO2). Ser154 is modified (phosphoserine). Positions 154-229 (SPLGELHRCI…LTLTRLFDRL (76 aa)) constitute a Sm domain. An SM 1 region spans residues 171 to 204 (VHIRTFKGLRGVCTGFLVAFDKFWNMALTDVDET). The interval 268-333 (ADTGRGSHKR…SRKKKRKPKV (66 aa)) is disordered. Ser280 bears the Phosphoserine mark. Over residues 299–322 (GRTTRTDGSSVGGTFSRATTLSRG) the composition is skewed to polar residues. The SM 2 stretch occupies residues 343-356 (INQIFIRGENVLLV).

Belongs to the snRNP Sm proteins family. Component of the heptameric ring U7 snRNP complex, or U7 Sm protein core complex, at least composed of LSM10, LSM11, SNRPB, SNRPD3, SNRPE, SNRPF, SNRPG and U7 snRNA. Formation of the U7 snRNP is an ATP-dependent process mediated by a specialized SMN complex containing at least the Sm protein core complex and additionally, the U7-specific LSM10 and LSM11 proteins. Identified in a histone pre-mRNA complex, at least composed of ERI1, LSM11, SLBP, SNRPB, SYNCRIP and YBX1. Interacts (via the Sm domains) with CLNS1A. Interacts with SMN and ZNF473. Interacts with PRMT5 and WDR77.

Its subcellular location is the nucleus. Functionally, component of the U7 snRNP complex that is involved in the histone 3'-end pre-mRNA processing. Increases U7 snRNA levels but not histone 3'-end pre-mRNA processing activity, when overexpressed. Required for cell cycle progression from G1 to S phases. Binds specifically to the Sm-binding site of U7 snRNA. This Homo sapiens (Human) protein is U7 snRNA-associated Sm-like protein LSm11.